The sequence spans 187 residues: uncharacterized protein (187 aa).

This is an uncharacterized protein from Dictyostelium discoideum (Social amoeba).